The sequence spans 193 residues: dCTP deaminase (193 aa).

DCTP contacts are provided by residues 110–115 (RSSLAR), aspartate 128, 136–138 (VLE), tyrosine 171, lysine 178, and glutamine 182. Residue glutamate 138 is the Proton donor/acceptor of the active site. Residues 168-193 (DRPYNRRQDAKYKNQQGAVSSRIDED) form a disordered region. A compositionally biased stretch (basic and acidic residues) spans 170–179 (PYNRRQDAKY).

The protein belongs to the dCTP deaminase family. As to quaternary structure, homotrimer.

The catalysed reaction is dCTP + H2O + H(+) = dUTP + NH4(+). The protein operates within pyrimidine metabolism; dUMP biosynthesis; dUMP from dCTP (dUTP route): step 1/2. Catalyzes the deamination of dCTP to dUTP. This Photorhabdus laumondii subsp. laumondii (strain DSM 15139 / CIP 105565 / TT01) (Photorhabdus luminescens subsp. laumondii) protein is dCTP deaminase.